Here is a 600-residue protein sequence, read N- to C-terminus: Dihydroxy-acid dehydratase (600 aa).

Asp82 contacts Mg(2+). Cys123 provides a ligand contact to [2Fe-2S] cluster. Mg(2+)-binding residues include Asp124 and Lys125. Lys125 carries the N6-carboxylysine modification. Cys192 contacts [2Fe-2S] cluster. Glu489 lines the Mg(2+) pocket. The active-site Proton acceptor is the Ser515.

Belongs to the IlvD/Edd family. As to quaternary structure, homodimer. [2Fe-2S] cluster serves as cofactor. The cofactor is Mg(2+).

It catalyses the reaction (2R)-2,3-dihydroxy-3-methylbutanoate = 3-methyl-2-oxobutanoate + H2O. It carries out the reaction (2R,3R)-2,3-dihydroxy-3-methylpentanoate = (S)-3-methyl-2-oxopentanoate + H2O. It participates in amino-acid biosynthesis; L-isoleucine biosynthesis; L-isoleucine from 2-oxobutanoate: step 3/4. It functions in the pathway amino-acid biosynthesis; L-valine biosynthesis; L-valine from pyruvate: step 3/4. In terms of biological role, functions in the biosynthesis of branched-chain amino acids. Catalyzes the dehydration of (2R,3R)-2,3-dihydroxy-3-methylpentanoate (2,3-dihydroxy-3-methylvalerate) into 2-oxo-3-methylpentanoate (2-oxo-3-methylvalerate) and of (2R)-2,3-dihydroxy-3-methylbutanoate (2,3-dihydroxyisovalerate) into 2-oxo-3-methylbutanoate (2-oxoisovalerate), the penultimate precursor to L-isoleucine and L-valine, respectively. The sequence is that of Dihydroxy-acid dehydratase from Bacteroides thetaiotaomicron (strain ATCC 29148 / DSM 2079 / JCM 5827 / CCUG 10774 / NCTC 10582 / VPI-5482 / E50).